The following is a 23-amino-acid chain: Cardioactive peptide CAP23 (23 aa).

An intrachain disulfide couples Cys7 to Cys19.

Belongs to the GBP/PSP1/paralytic peptide family.

In terms of biological role, has excitatory effects on a semi-isolated heart from larval Manduca sexta, causing an inotropic effect at low concentrations of peptide and chronotropic and inotropic effects at high doses. This Spodoptera eridania (Southern armyworm) protein is Cardioactive peptide CAP23.